We begin with the raw amino-acid sequence, 120 residues long: Guanidine hydrolase-activating protein A (120 aa).

His2, Glu3, and Glu41 together coordinate Ni(2+). Residues Cys74, Cys77, Cys91, and Cys94 each contribute to the Zn(2+) site.

Belongs to the HypA/HybF family.

Its function is as follows. Involved in the maturation of the nickel-dependent guanidine hydrolase GdmH. Required for nickel insertion into the metal center of GdmH. Seems to be required only for GdmH activation and not for activity. The polypeptide is Guanidine hydrolase-activating protein A (Synechocystis sp. (strain ATCC 27184 / PCC 6803 / Kazusa)).